A 1076-amino-acid chain; its full sequence is Bifunctional glutamine synthetase adenylyltransferase/adenylyl-removing enzyme (1076 aa).

The adenylyl removase stretch occupies residues 1–521 (MESSIFKPSS…LHLDIYYRPM (521 aa)). The segment at 524–1076 (VNAQMENDQI…LERNRRRAQR (553 aa)) is adenylyl transferase. Residues 1042–1056 (TATASAATQQPQTAP) are compositionally biased toward low complexity. Residues 1042 to 1076 (TATASAATQQPQTAPRPRMHVIAPRLERNRRRAQR) are disordered.

This sequence belongs to the GlnE family. It depends on Mg(2+) as a cofactor.

It carries out the reaction [glutamine synthetase]-O(4)-(5'-adenylyl)-L-tyrosine + phosphate = [glutamine synthetase]-L-tyrosine + ADP. The enzyme catalyses [glutamine synthetase]-L-tyrosine + ATP = [glutamine synthetase]-O(4)-(5'-adenylyl)-L-tyrosine + diphosphate. Involved in the regulation of glutamine synthetase GlnA, a key enzyme in the process to assimilate ammonia. When cellular nitrogen levels are high, the C-terminal adenylyl transferase (AT) inactivates GlnA by covalent transfer of an adenylyl group from ATP to specific tyrosine residue of GlnA, thus reducing its activity. Conversely, when nitrogen levels are low, the N-terminal adenylyl removase (AR) activates GlnA by removing the adenylyl group by phosphorolysis, increasing its activity. The regulatory region of GlnE binds the signal transduction protein PII (GlnB) which indicates the nitrogen status of the cell. This Bifidobacterium longum (strain DJO10A) protein is Bifunctional glutamine synthetase adenylyltransferase/adenylyl-removing enzyme.